Reading from the N-terminus, the 99-residue chain is Plastocyanin (99 aa).

Positions 1-99 (AEVLLGSSDG…AGMVGKVTVN (99 aa)) constitute a Plastocyanin-like domain. Positions 37, 84, 87, and 92 each coordinate Cu cation.

It belongs to the plastocyanin family. Cu(2+) serves as cofactor.

The protein localises to the plastid. Its subcellular location is the chloroplast thylakoid membrane. Its function is as follows. Participates in electron transfer between P700 and the cytochrome b6-f complex in photosystem I. The protein is Plastocyanin (PETE) of Lactuca sativa (Garden lettuce).